The chain runs to 342 residues: uncharacterized protein (342 aa).

Arg-69 is a substrate binding site. His-176 acts as the Proton donor in catalysis. Asp-240 is a binding site for substrate.

This sequence belongs to the aldose epimerase family.

This is an uncharacterized protein from Saccharomyces cerevisiae (strain ATCC 204508 / S288c) (Baker's yeast).